Here is a 490-residue protein sequence, read N- to C-terminus: Protein nucleotidyltransferase YdiU (490 aa).

8 residues coordinate ATP: glycine 94, glycine 96, arginine 97, lysine 117, aspartate 129, glycine 130, arginine 180, and arginine 187. The Proton acceptor role is filled by aspartate 256. Mg(2+) contacts are provided by asparagine 257 and aspartate 266. Aspartate 266 lines the ATP pocket.

The protein belongs to the SELO family. Mg(2+) is required as a cofactor. Requires Mn(2+) as cofactor.

It catalyses the reaction L-seryl-[protein] + ATP = 3-O-(5'-adenylyl)-L-seryl-[protein] + diphosphate. The enzyme catalyses L-threonyl-[protein] + ATP = 3-O-(5'-adenylyl)-L-threonyl-[protein] + diphosphate. It carries out the reaction L-tyrosyl-[protein] + ATP = O-(5'-adenylyl)-L-tyrosyl-[protein] + diphosphate. The catalysed reaction is L-histidyl-[protein] + UTP = N(tele)-(5'-uridylyl)-L-histidyl-[protein] + diphosphate. It catalyses the reaction L-seryl-[protein] + UTP = O-(5'-uridylyl)-L-seryl-[protein] + diphosphate. The enzyme catalyses L-tyrosyl-[protein] + UTP = O-(5'-uridylyl)-L-tyrosyl-[protein] + diphosphate. Nucleotidyltransferase involved in the post-translational modification of proteins. It can catalyze the addition of adenosine monophosphate (AMP) or uridine monophosphate (UMP) to a protein, resulting in modifications known as AMPylation and UMPylation. This chain is Protein nucleotidyltransferase YdiU, found in Clostridium perfringens (strain ATCC 13124 / DSM 756 / JCM 1290 / NCIMB 6125 / NCTC 8237 / Type A).